The primary structure comprises 500 residues: Low-density lipoprotein receptor-related protein 11 (500 aa).

A signal peptide spans 1-37 (MASVAQESAGSQRRLPPRHGALRGLLLLCLWLPSGRA). Over 38 to 450 (ALPPAAPLSE…GGEHPAPETG (413 aa)) the chain is Extracellular. Residues 99 to 184 (AMPDAIIRTK…FALHSGYSSY (86 aa)) form the MANSC domain. N-linked (GlcNAc...) asparagine glycosylation is found at N164 and N291. One can recognise a PKD domain in the interval 210-305 (PLSKAGQDVV…VLRAAYSTGG (96 aa)). The LDL-receptor class A domain occupies 309–345 (TCSRYHFFCDDGCCIDITLACDGVQQCPDGSDEDFCQ). Intrachain disulfides connect C310–C322, C317–C335, and C329–C344. The disordered stretch occupies residues 358–445 (AASPALPRTT…KGDGGGGEHP (88 aa)). N401 carries an N-linked (GlcNAc...) asparagine glycan. Residues 451 to 473 (AVLPLALGLAITALLLLMVACRL) form a helical membrane-spanning segment. At 474–500 (RLVKQKLKKARPITSEESDYLINGMYL) the chain is on the cytoplasmic side. The residue at position 491 (S491) is a Phosphoserine.

This sequence belongs to the LDLR family.

The protein localises to the membrane. The protein is Low-density lipoprotein receptor-related protein 11 (LRP11) of Homo sapiens (Human).